The chain runs to 726 residues: MAR-binding filament-like protein 1 (726 aa).

A chloroplast-targeting transit peptide spans 1–41 (MGFLIGGSCFVPSVPLHSRFLSSPSSSSSSSPSSSQFGLLC). Residues 42–95 (SSNVAKFKRRRPTLASLNQEDGYEYDVASAKRRAFLLVGISVLPFLQLRSPALA) constitute a thylakoid transit peptide. The Lumenal, thylakoid portion of the chain corresponds to 96-124 (DERGNEIKTSKVDLETEVAVVSEGTSPNP). The chain crosses the membrane as a helical span at residues 125–145 (FLALLNGLGIFSAGVLGALYA). Residues 144-691 (YALARQDTKA…KGEILRMRSQ (548 aa)) adopt a coiled-coil conformation. Residues 146 to 726 (LARQDTKAAE…VRRRKSSTSS (581 aa)) are Stromal-facing. A disordered region spans residues 678-726 (LGSAKGEILRMRSQPDSVKAVNSTDNKEKSDNTVTVKKVVRRRKSSTSS). A compositionally biased stretch (polar residues) spans 691–701 (QPDSVKAVNST). Residues 715-722 (KVVRRRKS) carry the Nuclear localization signal motif. Basic residues predominate over residues 715-726 (KVVRRRKSSTSS).

Interacts with PTST2; the interaction is essential for the initiation of starch granules biosynthesis in leaf chloroplasts, for the correct location of the process in the stromal spaces between the thylakoid membranes, and for the association of PTST2 with the thylakoid membranes. Post-translationally, predicted to be translocated into the thylakoid by the Tat system. The position of the transit peptide cleavages have not been experimentally proven.

It localises to the plastid. The protein resides in the chloroplast. It is found in the chloroplast thylakoid membrane. The protein localises to the chloroplast stroma. Its subcellular location is the chloroplast nucleoid. It localises to the nucleus. The protein resides in the nucleus matrix. Functionally, DNA-binding protein required for the initiation of starch granules biosynthesis in leaf chloroplasts. Anchored to the thylakoid membranes with its C-terminus facing into the stroma where it is essential for localizing PTST2 and SS4 to the stromal spaces between the thylakoid membranes in order to begin starch granule formation. Associated with leaf chloroplastic nucleoids in vivo. Binds to various chloroplastic double-stranded DNA fragments without particular sequence specificity in vitro. May function at the interface between nucleoids and thylakoids possibly by anchoring nucleoids to the thylakoid membrane system in mature chloroplasts. Likely to participate in nuclear architecture by connecting chromatin with the nuclear matrix and potentially with the nuclear envelope. In Arabidopsis thaliana (Mouse-ear cress), this protein is MAR-binding filament-like protein 1.